The following is a 235-amino-acid chain: Small ribosomal subunit protein eS4 (235 aa).

Positions 38–99 (VTLLSIIRDY…GESYRVVYND (62 aa)) constitute an S4 RNA-binding domain.

Belongs to the eukaryotic ribosomal protein eS4 family.

This chain is Small ribosomal subunit protein eS4 (rps4e), found in Thermoplasma acidophilum (strain ATCC 25905 / DSM 1728 / JCM 9062 / NBRC 15155 / AMRC-C165).